A 405-amino-acid chain; its full sequence is Probable succinyl-diaminopimelate desuccinylase (405 aa).

H72 provides a ligand contact to Zn(2+). The active site involves D74. A Zn(2+)-binding site is contributed by D105. The active-site Proton acceptor is E139. Residues E140, E165, and H377 each contribute to the Zn(2+) site.

The protein belongs to the peptidase M20A family. Zn(2+) is required as a cofactor. The cofactor is Co(2+).

It catalyses the reaction N-succinyl-(2S,6S)-2,6-diaminopimelate + H2O = (2S,6S)-2,6-diaminopimelate + succinate. The protein operates within amino-acid biosynthesis; L-lysine biosynthesis via DAP pathway; LL-2,6-diaminopimelate from (S)-tetrahydrodipicolinate (succinylase route): step 3/3. This Staphylococcus epidermidis (strain ATCC 35984 / DSM 28319 / BCRC 17069 / CCUG 31568 / BM 3577 / RP62A) protein is Probable succinyl-diaminopimelate desuccinylase (dapE).